The following is a 168-amino-acid chain: Large ribosomal subunit protein uL5 (168 aa).

The protein belongs to the universal ribosomal protein uL5 family. In terms of assembly, part of the 50S ribosomal subunit; contacts the 5S rRNA and probably tRNA. Forms a bridge to the 30S subunit in the 70S ribosome.

This is one of the proteins that bind and probably mediate the attachment of the 5S RNA into the large ribosomal subunit, where it forms part of the central protuberance. In the 70S ribosome it contacts protein S13 of the 30S subunit (bridge B1b), connecting the 2 subunits; this bridge is implicated in subunit movement. May contact the P site tRNA; the 5S rRNA and some of its associated proteins might help stabilize positioning of ribosome-bound tRNAs. The protein is Large ribosomal subunit protein uL5 of Methanosphaera stadtmanae (strain ATCC 43021 / DSM 3091 / JCM 11832 / MCB-3).